The chain runs to 432 residues: Tol-Pal system protein TolB (432 aa).

The N-terminal stretch at 1–21 (MKKVIYTIVGFVFMWSTSVYA) is a signal peptide.

The protein belongs to the TolB family. As to quaternary structure, the Tol-Pal system is composed of five core proteins: the inner membrane proteins TolA, TolQ and TolR, the periplasmic protein TolB and the outer membrane protein Pal. They form a network linking the inner and outer membranes and the peptidoglycan layer.

The protein localises to the periplasm. Its function is as follows. Part of the Tol-Pal system, which plays a role in outer membrane invagination during cell division and is important for maintaining outer membrane integrity. The sequence is that of Tol-Pal system protein TolB from Hydrogenovibrio crunogenus (strain DSM 25203 / XCL-2) (Thiomicrospira crunogena).